We begin with the raw amino-acid sequence, 76 residues long: Defensin-like protein 71 (76 aa).

The first 22 residues, 1–22 (MAMTQVFVIFILLATSLCNSNA), serve as a signal peptide directing secretion. Disulfide bonds link cysteine 36–cysteine 74, cysteine 40–cysteine 63, cysteine 49–cysteine 72, and cysteine 53–cysteine 73.

This sequence belongs to the DEFL family.

It is found in the secreted. The polypeptide is Defensin-like protein 71 (LCR84) (Arabidopsis thaliana (Mouse-ear cress)).